Here is a 334-residue protein sequence, read N- to C-terminus: N-acetyl-S-alkylcysteine monooxygenase (334 aa).

It to bacterial alkanal monooxygenase alpha and beta chains.

It catalyses the reaction N-acetyl-S-benzyl-L-cysteine + FMNH2 + O2 = (R)-N-acetyl-S-benzyl-L-cysteine sulfoxide + FMN + H2O + H(+). It carries out the reaction N-acetyl-S-methyl-L-cysteine + FMNH2 + O2 = (R)-N-acetyl-S-methyl-L-cysteine sulfoxide + FMN + H2O + H(+). It functions in the pathway amino-acid metabolism. Involved in a cysteine salvage pathway from S-alkylcysteine. Catalyzes the oxidation of N-acetyl-S-benzyl-L-cysteine and N-acetyl-S-methyl-L-cysteine to (R)-N-acetyl-S-benzyl-L-cysteine sulfoxide and (R)-N-acetyl-S-methyl-L-cysteine sulfoxide, respectively. This pathway is likely important in the catabolism of alkylated cysteine generated by proteolysis of alkylated glutathione formed in the detoxification of a wide range of electrophiles. The polypeptide is N-acetyl-S-alkylcysteine monooxygenase (Bacillus subtilis (strain 168)).